The following is a 205-amino-acid chain: LexA repressor (205 aa).

Positions 28 to 48 form a DNA-binding region, H-T-H motif; sequence RAEIAASLGFRSPNAAEEHLK. Residues Ser-122 and Lys-159 each act as for autocatalytic cleavage activity in the active site.

It belongs to the peptidase S24 family. Homodimer.

The catalysed reaction is Hydrolysis of Ala-|-Gly bond in repressor LexA.. In terms of biological role, represses a number of genes involved in the response to DNA damage (SOS response), including recA and lexA. Binds to the 16 bp palindromic sequence 5'-CTGTATATATATACAG-3'. In the presence of single-stranded DNA, RecA interacts with LexA causing an autocatalytic cleavage which disrupts the DNA-binding part of LexA, leading to derepression of the SOS regulon and eventually DNA repair. This Providencia rettgeri protein is LexA repressor.